Consider the following 277-residue polypeptide: MKQLYGVIGNPIGHSLSPVMHNDAFEHLNMDAHYHAFLVKEEVLGEAVRGLKALGISGFNVTTPHKVAIMDYLDEIDPLAKQIGAVNTVVHKDGKLIGYNTDGIGFVRALQSISSKPLQEKRILLLGAGGASRAIYFSLADVGVKEIDVANRTVDKAKELITACKATVHSVALSLEKATEEQGNYDIIIQTTTIGMHPRVEHTPLQISSLNKGTIVSDIIYNPFETKILCEAKEQGAMIQNGIDMFVYQGALAFEMWTGRTPNIERMKQLVIRKLGG.

Residues 15 to 17 (SLS) and T62 contribute to the shikimate site. Catalysis depends on K66, which acts as the Proton acceptor. Residues N87 and D102 each contribute to the shikimate site. Residues 127 to 131 (GAGGA), 151 to 156 (NRTVDK), and I219 contribute to the NADP(+) site. Residue Y221 coordinates shikimate. G242 contributes to the NADP(+) binding site.

The protein belongs to the shikimate dehydrogenase family. Homodimer.

The enzyme catalyses shikimate + NADP(+) = 3-dehydroshikimate + NADPH + H(+). It functions in the pathway metabolic intermediate biosynthesis; chorismate biosynthesis; chorismate from D-erythrose 4-phosphate and phosphoenolpyruvate: step 4/7. Functionally, involved in the biosynthesis of the chorismate, which leads to the biosynthesis of aromatic amino acids. Catalyzes the reversible NADPH linked reduction of 3-dehydroshikimate (DHSA) to yield shikimate (SA). In Bacillus cereus (strain ATCC 10987 / NRS 248), this protein is Shikimate dehydrogenase (NADP(+)).